The sequence spans 583 residues: Phosphoglucomutase, cytoplasmic 1 (583 aa).

2 residues coordinate alpha-D-glucose 1,6-bisphosphate: arginine 25 and serine 124. Serine 124 acts as the Phosphoserine intermediate in catalysis. Serine 124, aspartate 300, aspartate 302, and aspartate 304 together coordinate Mg(2+). Serine 124 is modified (phosphoserine). Alpha-D-glucose 1,6-bisphosphate contacts are provided by aspartate 304, arginine 305, threonine 368, glutamate 387, serine 389, and lysine 400.

This sequence belongs to the phosphohexose mutase family. In terms of assembly, monomer. Mg(2+) serves as cofactor. Autophosphorylated. Mostly expressed in roots and coleoptiles, and, to a lower extent, in leaves, pollen and developing seeds.

It is found in the cytoplasm. It catalyses the reaction alpha-D-glucose 1-phosphate = alpha-D-glucose 6-phosphate. The enzyme catalyses O-phospho-L-seryl-[protein] + alpha-D-glucose 1-phosphate = alpha-D-glucose 1,6-bisphosphate + L-seryl-[protein]. It carries out the reaction alpha-D-glucose 1,6-bisphosphate + L-seryl-[protein] = O-phospho-L-seryl-[protein] + alpha-D-glucose 6-phosphate. In terms of biological role, catalyzes the reversible isomerization of alpha-D-glucose 1-phosphate to alpha-D-glucose 6-phosphate. The mechanism proceeds via the intermediate compound alpha-D-glucose 1,6-bisphosphate. This enzyme participates in both the breakdown and synthesis of glucose. In Zea mays (Maize), this protein is Phosphoglucomutase, cytoplasmic 1.